The primary structure comprises 449 residues: Chromogranin-A (449 aa).

Positions 1–18 (MRSAAVLALLLCAGQVIA) are cleaved as a signal peptide. Cys35 and Cys56 form a disulfide bridge. Residues 87–431 (AKERTHQQKK…EDQELESLSA (345 aa)) are disordered. Position 99 is a phosphoserine (Ser99). The segment covering 107-140 (VLEKPNDQAEPKEVTEEVSSKDAAEKRDDFKEVE) has biased composition (basic and acidic residues). Ser142 is subject to Phosphoserine. Ser185 carries O-linked (GalNAc...) serine glycosylation. The residue at position 191 (Tyr191) is a Phosphotyrosine. A Phosphoserine modification is found at Ser200. Ser204 carries an O-linked (GalNAc...) serine glycan. Position 215 is a phosphoserine (Ser215). A compositionally biased stretch (basic and acidic residues) spans 233–242 (EAEAREKAVP). The O-linked (GalNAc...) threonine glycan is linked to Thr249. Basic and acidic residues predominate over residues 279–297 (GAEEAKPPEGKGEWAHSRQ). Ser295 is subject to Phosphoserine. A Glycine amide modification is found at Gly312. A phosphoserine mark is found at Ser315, Ser325, and Ser363. Residues 323–351 (QLSKEWEDAKRWSKMDQLAKELTAEKRLE) show a composition bias toward basic and acidic residues. Methionine sulfoxide is present on Met364. Ser390, Ser394, Ser416, and Ser430 each carry phosphoserine. Residues 406 to 423 (YPEEKKEEEGSANRRPED) show a composition bias toward basic and acidic residues. The O-linked (Xyl...) (chondroitin sulfate) serine glycan is linked to Ser416.

It belongs to the chromogranin/secretogranin protein family. In terms of assembly, self-interacts; self-assembly is promoted in vitro by chondroitin sulfate attachment which occurs at mildly acidic pH conditions. Interacts with SCG3. Interacts with ITPR1 in the secretory granules. In secretory granules, is attacked at both N- and C-terminal sides by proteolytic enzymes generating numerous peptides of various activities. Proteolytic processing can give rise to additional longer forms of catestatin peptides which display a less potent catecholamine release-inhibitory activity. In terms of processing, O-glycosylated; contains chondroitin sulfate (CS). CS attachment is pH-dependent, being observed at mildly acidic conditions of pH 5 but not at neutral pH, and promotes self-assembly in vitro. As to expression, highest concentration of GE-25 found in adrenal medulla with lower levels present in the pituitary, the intestinal mucosa and the pancreas. Also found in the brain.

The protein resides in the secreted. It is found in the cytoplasmic vesicle. It localises to the secretory vesicle. The protein localises to the neuronal dense core vesicle. Strongly inhibits glucose induced insulin release from the pancreas. Its function is as follows. Completely inhibits catecholamine release from chromaffin cells. In terms of biological role, has antibacterial activity against M.luteus. Not active against E.coli. Functionally, inhibits catecholamine release from chromaffin cells and noradrenergic neurons by acting as a non-competitive nicotinic cholinergic antagonist. Displays antibacterial activity against Gram-positive bacteria M.luteus and B.megaterium, and Gram-negative bacteria E.coli, and antifungal activity against a variety of filamentous fungi including A.fumigatus, N.hematococca, F.culmorum, F.oxyporum, T.mentagrophytes and several forms of Candida: C.albicans, C.tropicalis, C.glabrata and C.neoform. Can induce mast cell migration, degranulation and production of cytokines and chemokines. Has antibacterial activity against Gram-positive bacteria M.luteus, B.megaterium. Not active against Gram-positive bacteria B.cereus, B.subtilis, S.pyogenes, M.fortuitum, S.aureus and L.monocytogenes and against Gram-negative bacteria E.coli, E.cloacae, S.typhimurium, K.pneumoniae and P.aeruginosa. Possesses antifungal activity against N.crassa, A.fumigatus, A.brassicicola, N.hematococca, F.culmorum and F.oxyporum and against the yeast S.cerevisiae and C.albicans. Inactive against A.benhamiae. Its function is as follows. Has antifungal activity against N.crassa, A.fumigatus, A.brassicicola, N.hematococca, F.culmorum, F.oxyporum, A.benhamiae, C.neoformans, as well as against yeasts C.albicans, and C.tropicalis. Seems to be inactive against C.glabrata. Interacts with the fungal cell wall, crosses the plasma membrane and accumulates in fungal cells where it inhibits calcineurin activity. In terms of biological role, regulates granule biogenesis in endocrine cells by up-regulating the transcription of protease nexin 1 (SERPINE2) via a cAMP-PKA-SP1 pathway. This leads to inhibition of granule protein degradation in the Golgi complex which in turn promotes granule formation. This Bos taurus (Bovine) protein is Chromogranin-A (CHGA).